Here is a 507-residue protein sequence, read N- to C-terminus: Beta-glucosidase 13 (507 aa).

Residues 1–22 form the signal peptide; sequence MRTKYFSLLVFIIVLASNEVIA. Q50 lines the a beta-D-glucoside pocket. N81 carries N-linked (GlcNAc...) asparagine glycosylation. A beta-D-glucoside is bound by residues H154 and 199–200; that span reads NE. The active-site Proton donor is E200. Residues C219 and C227 are joined by a disulfide bond. An N-linked (GlcNAc...) asparagine glycan is attached at N226. Y344 is a binding site for a beta-D-glucoside. Residue N358 is glycosylated (N-linked (GlcNAc...) asparagine). A beta-D-glucoside is bound by residues E414, W459, 466 to 467, and F475; that span reads EW. Residue E414 is the Nucleophile of the active site.

It belongs to the glycosyl hydrolase 1 family.

It carries out the reaction Hydrolysis of terminal, non-reducing beta-D-glucosyl residues with release of beta-D-glucose.. In Arabidopsis thaliana (Mouse-ear cress), this protein is Beta-glucosidase 13.